A 104-amino-acid chain; its full sequence is Iron-sulfur cluster assembly protein CyaY (104 aa).

It belongs to the frataxin family.

Involved in iron-sulfur (Fe-S) cluster assembly. May act as a regulator of Fe-S biogenesis. This Vibrio campbellii (strain ATCC BAA-1116) protein is Iron-sulfur cluster assembly protein CyaY.